The primary structure comprises 31 residues: Cytochrome b6-f complex subunit 6 (31 aa).

Residues 4 to 24 traverse the membrane as a helical segment; the sequence is ITSYFGFLLAVLTITSALFIG.

Belongs to the PetL family. The 4 large subunits of the cytochrome b6-f complex are cytochrome b6, subunit IV (17 kDa polypeptide, PetD), cytochrome f and the Rieske protein, while the 4 small subunits are PetG, PetL, PetM and PetN. The complex functions as a dimer.

The protein localises to the plastid. It localises to the chloroplast thylakoid membrane. Functionally, component of the cytochrome b6-f complex, which mediates electron transfer between photosystem II (PSII) and photosystem I (PSI), cyclic electron flow around PSI, and state transitions. PetL is important for photoautotrophic growth as well as for electron transfer efficiency and stability of the cytochrome b6-f complex. The polypeptide is Cytochrome b6-f complex subunit 6 (Cucumis sativus (Cucumber)).